The primary structure comprises 252 residues: Enolase-phosphatase E1 (252 aa).

2 residues coordinate Mg(2+): Asp18 and Glu20. Substrate is bound by residues 149–150 (SS) and Lys184. Residue Asp209 coordinates Mg(2+).

It belongs to the HAD-like hydrolase superfamily. MasA/MtnC family. In terms of assembly, monomer. Requires Mg(2+) as cofactor.

The protein resides in the cytoplasm. Its subcellular location is the nucleus. It carries out the reaction 5-methylsulfanyl-2,3-dioxopentyl phosphate + H2O = 1,2-dihydroxy-5-(methylsulfanyl)pent-1-en-3-one + phosphate. Its pathway is amino-acid biosynthesis; L-methionine biosynthesis via salvage pathway; L-methionine from S-methyl-5-thio-alpha-D-ribose 1-phosphate: step 3/6. It functions in the pathway amino-acid biosynthesis; L-methionine biosynthesis via salvage pathway; L-methionine from S-methyl-5-thio-alpha-D-ribose 1-phosphate: step 4/6. Its function is as follows. Bifunctional enzyme that catalyzes the enolization of 2,3-diketo-5-methylthiopentyl-1-phosphate (DK-MTP-1-P) into the intermediate 2-hydroxy-3-keto-5-methylthiopentenyl-1-phosphate (HK-MTPenyl-1-P), which is then dephosphorylated to form the acireductone 1,2-dihydroxy-3-keto-5-methylthiopentene (DHK-MTPene). The polypeptide is Enolase-phosphatase E1 (Naegleria gruberi (Amoeba)).